A 637-amino-acid chain; its full sequence is MGSPRLAALLLSLPLLLIGLAVSARVACPCLRSWTSHCLLAYRVDKRFAGLQWGWFPLLVRKSKSPPKFEDYWRHRTPASFQRKLLGSPSLSEESHRISIPSSAISHRGQRTKRAQPSAAEGREHLPEAGSQKCGGPEFSFDLLPEVQAVRVTIPAGPKASVRLCYQWALECEDLSSPFDTQKIVSGGHTVDLPYEFLLPCMCIEASYLQEDTVRRKKCPFQSWPEAYGSDFWQSIRFTDYSQHNQMVMALTLRCPLKLEASLCWRQDPLTPCETLPNATAQESEGWYILENVDLHPQLCFKFSFENSSHVECPHQSGSLPSWTVSMDTQAQQLTLHFSSRTYATFSAAWSDPGLGPDTPMPPVYSISQTQGSVPVTLDLIIPFLRQENCILVWRSDVHFAWKHVLCPDVSHRHLGLLILALLALTALVGVVLVLLGRRLLPGSGRTRPVLLLHAADSEAQRRLVGALAELLRTALGGGRDVIVDLWEGTHVARIGPLPWLWAARERVAREQGTVLLLWNCAGPSTACSGDPQAASLRTLLCAAPRPLLLAYFSRLCAKGDIPRPLRALPRYRLLRDLPRLLRALDAQPATLASSWSHLGAKRCLKNRLEQCHLLELEAAKDDYQGSTNSPCGFSCL.

Residues 1-23 (MGSPRLAALLLSLPLLLIGLAVS) form the signal peptide. Over 24–414 (ARVACPCLRS…VLCPDVSHRH (391 aa)) the chain is Extracellular. The segment at 87–134 (GSPSLSEESHRISIPSSAISHRGQRTKRAQPSAAEGREHLPEAGSQKC) is disordered. Asn278 and Asn307 each carry an N-linked (GlcNAc...) asparagine glycan. A helical transmembrane segment spans residues 415-435 (LGLLILALLALTALVGVVLVL). Over 436–637 (LGRRLLPGSG…TNSPCGFSCL (202 aa)) the chain is Cytoplasmic. Positions 447 to 583 (TRPVLLLHAA…LLRDLPRLLR (137 aa)) constitute an SEFIR domain.

In terms of assembly, forms heterodimers with IL17RA; the heterodimer binds IL17C. As to expression, predominantly expressed in mucosal tissues, including trachea, lung, kidney and stomach. Highly expressed in colon epithelial cells. Also expressed in testis. Low expression, if any, in heart, liver, spleen, or brain. Among CD4 T-helper cells, expressed at high levels in Th17 cells.

The protein localises to the cell membrane. Its subcellular location is the secreted. The protein resides in the cytoplasm. Functionally, specific functional receptor for IL17C, signaling through the NF-kappa-B and MAPK pathways. Requires TRAF3IP2 /ACT1 for signaling. Crucial regulator in innate immunity to bacterial pathogens, such as Citrobacter rodentium. Isoform 4 and isoform 5 may be either cytoplasmic inactive or dominant active forms. Isoform 2 and isoform 3 may act as soluble decoy receptors. This chain is Interleukin-17 receptor E (Il17re), found in Mus musculus (Mouse).